The primary structure comprises 324 residues: Adenine deaminase (324 aa).

The Zn(2+) site is built by H11, H13, and H189. E192 functions as the Proton donor in the catalytic mechanism. D270 provides a ligand contact to Zn(2+). D271 contributes to the substrate binding site.

Belongs to the metallo-dependent hydrolases superfamily. Adenosine and AMP deaminases family. Adenine deaminase type 2 subfamily. Requires Zn(2+) as cofactor.

It catalyses the reaction adenine + H2O + H(+) = hypoxanthine + NH4(+). Its function is as follows. Catalyzes the hydrolytic deamination of adenine to hypoxanthine. Plays an important role in the purine salvage pathway and in nitrogen catabolism. The sequence is that of Adenine deaminase from Sinorhizobium fredii (strain NBRC 101917 / NGR234).